Here is a 174-residue protein sequence, read N- to C-terminus: MAEFHDDDAQFEEKSKSQIKRELHALQDLGERLTTLQPQLLERLPLTDPLRKAVLDAPKHKAHIARKRHIQYIGKLMRDQDVDAIVALIEQVDTSTRQYNERFHALERWRDQLIAGGDAALDAFVGEFPDCDRQHLRSLVRHAQHEAAHNKPPAAARKVFKYIRELDETKRGLR.

It belongs to the DarP family.

It localises to the cytoplasm. In terms of biological role, member of a network of 50S ribosomal subunit biogenesis factors which assembles along the 30S-50S interface, preventing incorrect 23S rRNA structures from forming. Promotes peptidyl transferase center (PTC) maturation. The chain is Dual-action ribosomal maturation protein DarP from Pseudomonas paraeruginosa (strain DSM 24068 / PA7) (Pseudomonas aeruginosa (strain PA7)).